Here is a 510-residue protein sequence, read N- to C-terminus: Beta-1,4 N-acetylgalactosaminyltransferase 2 (510 aa).

The Cytoplasmic segment spans residues 1–15 (MTSSVSFASFRFPWL). Residues 16–32 (LKTFVLMVGLATVAFMV) traverse the membrane as a helical; Signal-anchor for type II membrane protein segment. Residues 33 to 510 (RKVSLTTDFS…YFKNHLYCST (478 aa)) are Lumenal-facing. The N-linked (GlcNAc...) asparagine glycan is linked to asparagine 390.

The protein belongs to the glycosyltransferase 2 family. As to quaternary structure, homodimer; disulfide-linked.

The protein localises to the golgi apparatus. Its subcellular location is the trans-Golgi network membrane. It carries out the reaction an N-acetyl-alpha-neuraminyl-(2-&gt;3)-beta-D-galactosyl derivative + UDP-N-acetyl-alpha-D-galactosamine = an N-acetyl-beta-D-galactosaminyl-(1-&gt;4)-[N-acetyl-alpha-neuraminyl-(2-&gt;3)]-beta-D-galactosyl derivative + UDP + H(+). The catalysed reaction is a 3-O-{alpha-Neu5Ac-(2-&gt;3)-beta-D-Gal-(1-&gt;3)-[alpha-Neu5Ac-(2-&gt;6)]-alpha-D-GalNAc}-L-seryl-[protein] + UDP-N-acetyl-alpha-D-galactosamine = a 3-O-{[alpha-Neu5Ac-(2-&gt;3)]-beta-D-GalNAc-(1-&gt;4)-beta-D-Gal-(1-&gt;3)-[alpha-Neu5Ac-(2-&gt;6)]-alpha-D-GalNAc}-L-seryl-[protein] + UDP + H(+). The enzyme catalyses a 3-O-{alpha-Neu5Ac-(2-&gt;3)-beta-D-Gal-(1-&gt;3)-[alpha-Neu5Ac-(2-&gt;6)]-alpha-D-GalNAc}-L-threonyl-[protein] + UDP-N-acetyl-alpha-D-galactosamine = a 3-O-{[alpha-Neu5Ac-(2-&gt;3)]-beta-D-GalNAc-(1-&gt;4)-beta-D-Gal-(1-&gt;3)-[alpha-Neu5Ac-(2-&gt;6)]-alpha-D-GalNAc}-L-threonyl-[protein] + UDP + H(+). It catalyses the reaction a neolactoside IV(3)-alpha-NeuAc-nLc4Cer + UDP-N-acetyl-alpha-D-galactosamine = a neolactoside IV(4)-GalNAc,IV(3)-alpha-NeuAc-nLc4Cer + UDP + H(+). It participates in protein modification; protein glycosylation. It functions in the pathway glycolipid biosynthesis. In terms of biological role, beta-1,4 N-acetylgalactosaminyltransferase involved in the biosynthesis of T-lymphocyte CT glycan antigen carried by CD45 family of protein phosphatases. Catalyzes the transfer of N-acetylgalactosamine (GalNAc) group in a beta-1,4-linkage from UDP-GalNAc to the galactose residue of NeuAcalpha2-&gt;3Gal-R to form GalNAcbeta1-&gt;4(NeuAcalpha2-&gt;3)Gal-R glycan epitope. This chain is Beta-1,4 N-acetylgalactosaminyltransferase 2, found in Mus musculus (Mouse).